A 159-amino-acid chain; its full sequence is uncharacterized protein (159 aa).

Positions 7–151 (LLINYKTLEE…NPLVWHPASE (145 aa)) constitute an N-acetyltransferase domain.

This is an uncharacterized protein from Bacillus licheniformis (strain ATCC 14580 / DSM 13 / JCM 2505 / CCUG 7422 / NBRC 12200 / NCIMB 9375 / NCTC 10341 / NRRL NRS-1264 / Gibson 46).